The sequence spans 315 residues: Olfactory receptor 3A1 (315 aa).

At 1-28 (MQPESGANGTVIAEFILLGLLEAPGLQP) the chain is on the extracellular side. N-linked (GlcNAc...) asparagine glycosylation is present at N8. A helical membrane pass occupies residues 29–52 (VVFVLFLFAYLVTVGGNLSILAAV). The Cytoplasmic portion of the chain corresponds to 53–60 (LVEPELHT). The helical transmembrane segment at 61–82 (PMYFFLGNLSVLDVGCISVTVP) threads the bilayer. The Extracellular segment spans residues 83 to 103 (SMLSRLLSRKRAVPCGACLTQ). C100 and C192 form a disulfide bridge. The helical transmembrane segment at 104–123 (LFFFHLFVGVDCFLLIAMAY) threads the bilayer. Over 124–143 (DRFLAICRPLTYSTRMSQTV) the chain is Cytoplasmic. The helical transmembrane segment at 144–161 (QRMLVAASWACAFTNALT) threads the bilayer. At 162 to 199 (HTVAMSTLNFCGPNVINHFYCDLPQLCQLSCSSTQLSE) the chain is on the extracellular side. The helical transmembrane segment at 200–223 (LLLFAVGFIMAGTSMALIVISYIH) threads the bilayer. Residues 224–240 (VAAAVLRIRSVEGRKKA) are Cytoplasmic-facing. Residues 241–264 (FSTCGSHLTVVAIFYGSGIFNYMR) traverse the membrane as a helical segment. The Extracellular segment spans residues 265–275 (LGSTKLSDKDK). A helical transmembrane segment spans residues 276 to 295 (AVGIFNTVINPMLNPIIYSF). Residues 296–315 (RNPDVQSAIWRMLTGRRSLA) lie on the Cytoplasmic side of the membrane.

This sequence belongs to the G-protein coupled receptor 1 family.

It is found in the cell membrane. Functionally, odorant receptor. This chain is Olfactory receptor 3A1 (OR3A1), found in Gorilla gorilla gorilla (Western lowland gorilla).